The sequence spans 199 residues: Octanoyltransferase (199 aa).

The BPL/LPL catalytic domain occupies 27–199 (SNSYDELWLL…FVQYFLTQFK (173 aa)). Residues 66 to 73 (RGGQVTYH), 133 to 135 (SIG), and 146 to 148 (GIA) contribute to the substrate site. The active-site Acyl-thioester intermediate is the C164.

This sequence belongs to the LipB family.

It localises to the cytoplasm. It catalyses the reaction octanoyl-[ACP] + L-lysyl-[protein] = N(6)-octanoyl-L-lysyl-[protein] + holo-[ACP] + H(+). Its pathway is protein modification; protein lipoylation via endogenous pathway; protein N(6)-(lipoyl)lysine from octanoyl-[acyl-carrier-protein]: step 1/2. Catalyzes the transfer of endogenously produced octanoic acid from octanoyl-acyl-carrier-protein onto the lipoyl domains of lipoate-dependent enzymes. Lipoyl-ACP can also act as a substrate although octanoyl-ACP is likely to be the physiological substrate. This Legionella pneumophila (strain Lens) protein is Octanoyltransferase.